The sequence spans 205 residues: Large ribosomal subunit protein uL4 (205 aa).

The segment at 43–77 (RRRSGTASTKGRSDVAGSRAKLFRQKGTGRARRGD) is disordered. Residues 63-73 (KLFRQKGTGRA) show a composition bias toward basic residues.

This sequence belongs to the universal ribosomal protein uL4 family. As to quaternary structure, part of the 50S ribosomal subunit.

Functionally, one of the primary rRNA binding proteins, this protein initially binds near the 5'-end of the 23S rRNA. It is important during the early stages of 50S assembly. It makes multiple contacts with different domains of the 23S rRNA in the assembled 50S subunit and ribosome. In terms of biological role, forms part of the polypeptide exit tunnel. This chain is Large ribosomal subunit protein uL4, found in Desulfosudis oleivorans (strain DSM 6200 / JCM 39069 / Hxd3) (Desulfococcus oleovorans).